The following is a 416-amino-acid chain: Cell division protein FtsZ (416 aa).

GTP contacts are provided by residues 20-24 (GGGVN), 107-109 (GTG), Glu-138, Arg-142, and Asp-186. Polar residues predominate over residues 319 to 335 (QETNANNSSPAQRQAES). The segment at 319 to 416 (QETNANNSSP…DSLDFPDFLK (98 aa)) is disordered. Residues 376 to 392 (QDDDIPDDAGFDVDLPA) show a composition bias toward acidic residues. Positions 404–416 (ARKDSLDFPDFLK) are enriched in basic and acidic residues.

It belongs to the FtsZ family. As to quaternary structure, homodimer. Polymerizes to form a dynamic ring structure in a strictly GTP-dependent manner. Interacts directly with several other division proteins.

The protein localises to the cytoplasm. Functionally, essential cell division protein that forms a contractile ring structure (Z ring) at the future cell division site. The regulation of the ring assembly controls the timing and the location of cell division. One of the functions of the FtsZ ring is to recruit other cell division proteins to the septum to produce a new cell wall between the dividing cells. Binds GTP and shows GTPase activity. The protein is Cell division protein FtsZ of Kocuria rhizophila (strain ATCC 9341 / DSM 348 / NBRC 103217 / DC2201).